A 206-amino-acid polypeptide reads, in one-letter code: Musculin (206 aa).

The interval 1 to 115 (MSTGSVSDPE…QSQRNAANAR (115 aa)) is disordered. Acidic residues predominate over residues 46-56 (SAEEEDPDGEE). The Nuclear localization signal signature appears at 71–76 (KRKRPR). A compositionally biased stretch (gly residues) spans 78 to 92 (AGGGGAGGSAGGGGK). A compositionally biased stretch (low complexity) spans 93-102 (KPLPAKGSAA). The 53-residue stretch at 107 to 159 (SQRNAANARERARMRVLSKAFSRLKTSLPWVPPDTKLSKLDTLRLASSYIAHL) folds into the bHLH domain.

In terms of assembly, efficient DNA binding requires dimerization with another bHLH protein. Binds DNA as a homodimer or a heterodimer. Forms a heterodimer with TCF3. As to expression, expressed in lymphoid tissues, B-cell lines and activated B-cells.

The protein localises to the nucleus. Transcription repressor capable of inhibiting the transactivation capability of TCF3/E47. May play a role in regulating antigen-dependent B-cell differentiation. The protein is Musculin (MSC) of Homo sapiens (Human).